The primary structure comprises 122 residues: Large ribosomal subunit protein uL14 (122 aa).

The protein belongs to the universal ribosomal protein uL14 family. In terms of assembly, part of the 50S ribosomal subunit. Forms a cluster with proteins L3 and L19. In the 70S ribosome, L14 and L19 interact and together make contacts with the 16S rRNA in bridges B5 and B8.

Binds to 23S rRNA. Forms part of two intersubunit bridges in the 70S ribosome. The protein is Large ribosomal subunit protein uL14 of Symbiobacterium thermophilum (strain DSM 24528 / JCM 14929 / IAM 14863 / T).